The following is a 345-amino-acid chain: Anthranilate phosphoribosyltransferase (345 aa).

Residues Gly-87, Gly-90 to Asp-91, Thr-95, Asn-97 to Thr-100, Lys-115 to Ser-123, and Ser-127 each bind 5-phospho-alpha-D-ribose 1-diphosphate. Gly-87 contributes to the anthranilate binding site. A Mg(2+)-binding site is contributed by Ser-99. Asn-118 is a binding site for anthranilate. Position 173 (Arg-173) interacts with anthranilate. Mg(2+) is bound by residues Asp-232 and Glu-233.

Belongs to the anthranilate phosphoribosyltransferase family. Homodimer. It depends on Mg(2+) as a cofactor.

It carries out the reaction N-(5-phospho-beta-D-ribosyl)anthranilate + diphosphate = 5-phospho-alpha-D-ribose 1-diphosphate + anthranilate. Its pathway is amino-acid biosynthesis; L-tryptophan biosynthesis; L-tryptophan from chorismate: step 2/5. In terms of biological role, catalyzes the transfer of the phosphoribosyl group of 5-phosphorylribose-1-pyrophosphate (PRPP) to anthranilate to yield N-(5'-phosphoribosyl)-anthranilate (PRA). The chain is Anthranilate phosphoribosyltransferase from Aeropyrum pernix (strain ATCC 700893 / DSM 11879 / JCM 9820 / NBRC 100138 / K1).